Reading from the N-terminus, the 375-residue chain is Citrate synthase (375 aa).

Active-site residues include His-266 and Asp-317.

The protein belongs to the citrate synthase family. In terms of assembly, homohexamer.

It carries out the reaction oxaloacetate + acetyl-CoA + H2O = citrate + CoA + H(+). The protein operates within carbohydrate metabolism; tricarboxylic acid cycle; isocitrate from oxaloacetate: step 1/2. Allosterically inhibited by NADH. The sequence is that of Citrate synthase (gltA) from Mycolicibacterium smegmatis (Mycobacterium smegmatis).